Consider the following 153-residue polypeptide: Large ribosomal subunit protein uL15 (153 aa).

The interval 1 to 42 (MRLNTIKPGMGSTKPRRRVGRGIGSGLGKTCGRGHKGQKSRA) is disordered. A compositionally biased stretch (gly residues) spans 21–31 (RGIGSGLGKTC).

Belongs to the universal ribosomal protein uL15 family. In terms of assembly, part of the 50S ribosomal subunit.

Its function is as follows. Binds to the 23S rRNA. The chain is Large ribosomal subunit protein uL15 from Nitrosomonas eutropha (strain DSM 101675 / C91 / Nm57).